The following is a 289-amino-acid chain: UPF0761 membrane protein ESA_04062 (289 aa).

Helical transmembrane passes span 44 to 64, 104 to 124, 140 to 160, 183 to 203, 215 to 235, and 244 to 264; these read LLSL…FPMF, VGAL…DSAL, FAVY…SLVI, IFPL…VPTT, LVAA…ITMF, and VLAV…IVLL.

The protein belongs to the UPF0761 family.

It is found in the cell inner membrane. This is UPF0761 membrane protein ESA_04062 from Cronobacter sakazakii (strain ATCC BAA-894) (Enterobacter sakazakii).